The following is a 285-amino-acid chain: Acetyl-coenzyme A carboxylase carboxyl transferase subunit beta (285 aa).

The region spanning 23–285 (VFRRCDGCSH…HLTAGRRARR (263 aa)) is the CoA carboxyltransferase N-terminal domain. Residues Cys27, Cys30, Cys46, and Cys49 each contribute to the Zn(2+) site. A C4-type zinc finger spans residues 27–49 (CDGCSHTHDAAELARTFEVCSQC).

This sequence belongs to the AccD/PCCB family. In terms of assembly, acetyl-CoA carboxylase is a heterohexamer composed of biotin carboxyl carrier protein (AccB), biotin carboxylase (AccC) and two subunits each of ACCase subunit alpha (AccA) and ACCase subunit beta (AccD). Zn(2+) serves as cofactor.

The protein resides in the cytoplasm. It carries out the reaction N(6)-carboxybiotinyl-L-lysyl-[protein] + acetyl-CoA = N(6)-biotinyl-L-lysyl-[protein] + malonyl-CoA. It participates in lipid metabolism; malonyl-CoA biosynthesis; malonyl-CoA from acetyl-CoA: step 1/1. Functionally, component of the acetyl coenzyme A carboxylase (ACC) complex. Biotin carboxylase (BC) catalyzes the carboxylation of biotin on its carrier protein (BCCP) and then the CO(2) group is transferred by the transcarboxylase to acetyl-CoA to form malonyl-CoA. The chain is Acetyl-coenzyme A carboxylase carboxyl transferase subunit beta from Sorangium cellulosum (strain So ce56) (Polyangium cellulosum (strain So ce56)).